A 244-amino-acid chain; its full sequence is Ferric aerobactin reductase IutB (244 aa).

4 residues coordinate [2Fe-2S] cluster: Cys220, Cys221, Cys232, and Cys235.

As to quaternary structure, monomer. [2Fe-2S] cluster serves as cofactor.

It localises to the cytoplasm. It catalyses the reaction 2 a Fe(II)-siderophore + NAD(+) + H(+) = 2 a Fe(III)-siderophore + NADH. It carries out the reaction 2 a Fe(II)-siderophore + NADP(+) + H(+) = 2 a Fe(III)-siderophore + NADPH. Functionally, ferric-siderophore reductase involved in iron removal from the siderophores after their transport into the cell. Acts as a major ferric-aerobactin reductase catalyzing the reduction of Fe(3+)-aerobactin, a citrate-hydroxamate siderophore produced by other bacteria. Catalyzes reduction of Fe(3+)-vulnibactin, a catecholate siderophore synthesized by V.vulnificus, in the absence of VuuB. Catalyzes reduction of ferrioxamine B and Fe(3+)-vibriobactin in vitro. No activity with Fe(3+)-enterobactin. Catalyzes reduction of ferric chelating compound Fe(3+)-nitrilotriacetic acid (NTA) in the presence of NADH, NADPH or reduced glutathione (GSH) as its electron donor in vitro. Also catalyzes reduction of ferric chelating compounds Fe(3+)-citrate and Fe(3+)-EDTA as well as non-complexed FeCl3 in the presence of GSH as its electron donor in vitro. Highest activity with Fe(3+)-NTA as electron acceptor and GSH as donor. The protein is Ferric aerobactin reductase IutB of Vibrio vulnificus.